We begin with the raw amino-acid sequence, 466 residues long: Soluble pyridine nucleotide transhydrogenase (466 aa).

FAD is bound at residue 36–45; sequence ERYHNVGGGC.

It belongs to the class-I pyridine nucleotide-disulfide oxidoreductase family. It depends on FAD as a cofactor.

The protein resides in the cytoplasm. It catalyses the reaction NAD(+) + NADPH = NADH + NADP(+). Its function is as follows. Conversion of NADPH, generated by peripheral catabolic pathways, to NADH, which can enter the respiratory chain for energy generation. The sequence is that of Soluble pyridine nucleotide transhydrogenase from Salmonella gallinarum (strain 287/91 / NCTC 13346).